The chain runs to 569 residues: Beta-galactoside-specific lectin 3 (569 aa).

A signal peptide spans 1-33 (MNAVMDSRGAWVSCFLILGLVFGATVKAETKFS). Glu-198 is an active-site residue. 3 disulfide bridges follow: Cys-280–Cys-311, Cys-327–Cys-346, and Cys-370–Cys-387. A propeptide spans 288 to 307 (EVRYWPLVIRPVLENSGAVD) (connecting peptide). The Ricin B-type lectin 1 domain occupies 314 to 441 (SEPTVRIVGR…YSLGQGWLAG (128 aa)). 329 to 331 (DVR) lines the D-galactose pocket. N-linked (GlcNAc...) asparagine glycans are attached at residues Asn-402 and Asn-442. One can recognise a Ricin B-type lectin 2 domain in the interval 445–568 (APREVTIYGF…GNPNQMWLPV (124 aa)). 2 cysteine pairs are disulfide-bonded: Cys-458–Cys-471 and Cys-497–Cys-514. 541 to 543 (DVA) is a D-galactose binding site.

Belongs to the ribosome-inactivating protein family. Type 2 RIP subfamily. Disulfide-linked dimer of A and B chains.

It carries out the reaction Endohydrolysis of the N-glycosidic bond at one specific adenosine on the 28S rRNA.. Its function is as follows. The A chain is responsible for inhibiting protein synthesis through the catalytic inactivation of 60S ribosomal subunits by removing adenine from position 4,324 of 28S rRNA. The B chain binds to cell receptors and probably facilitates the entry into the cell of the A chain; B chains are also responsible for cell agglutination (lectin activity). Inhibits growth of the human tumor cell line Molt4. The polypeptide is Beta-galactoside-specific lectin 3 (Viscum album (European mistletoe)).